We begin with the raw amino-acid sequence, 247 residues long: Chloride intracellular channel protein 2 (247 aa).

An N-terminal region spans residues 1-94; the sequence is MSGLRPGTQV…KIEEFLEQTL (94 aa). The interval 1–96 is required for insertion into the membrane; that stretch reads MSGLRPGTQV…EEFLEQTLAP (96 aa). A glutathione-binding site is contributed by Glu25. The short motif at 30–33 is the G-site element; sequence CPFC. Residues Cys30 and Cys33 are joined by a disulfide bond. The helical transmembrane segment at 32-52 threads the bilayer; sequence FCQRLFMILWLKGVKFNVTTV. Residues 76 to 239 enclose the GST C-terminal domain; it reads NKELKTDFIK…PEDKEIENTY (164 aa). The joint loop stretch occupies residues 95 to 106; the sequence is APPRYPHLSPKY. A C-terminal region spans residues 107-247; it reads KESFDVGCNL…TYANVAKQKS (141 aa). The foot loop stretch occupies residues 151-171; sequence NTPLLDEIDPDSAEEPPVSRR. Glutathione is bound at residue His227.

The protein belongs to the chloride channel CLIC family. In terms of assembly, monomer. Interacts with TRAPPC2 and RYR2. Expressed in adult and fetal brain, heart, skeletal muscle, liver, lung, and spleen. Detected in adult stomach and testis. Expressed in fetal thymus and kidney.

It localises to the cytoplasm. The protein localises to the membrane. The enzyme catalyses chloride(in) = chloride(out). It catalyses the reaction tert-butyl hydroperoxide + 2 glutathione = tert-butanol + glutathione disulfide + H2O. The catalysed reaction is cumene hydroperoxide + 2 glutathione = 2-phenylpropan-2-ol + glutathione disulfide + H2O. The channel conductance is regulated by pH. Functionally, in the soluble state, catalyzes glutaredoxin-like thiol disulfide exchange reactions with reduced glutathione as electron donor. Displays weak glutathione peroxidase activity. Can insert into membranes and form chloride ion channels. Membrane insertion seems to be redox-regulated and may occur only under oxidizing conditions. Modulates the activity of RYR2 and inhibits calcium influx. The chain is Chloride intracellular channel protein 2 from Homo sapiens (Human).